The primary structure comprises 439 residues: Putative myrosinase 3 (439 aa).

The N-terminal stretch at 1-19 is a signal peptide; that stretch reads MKFRALGLVLLLAVETCKA. The N-linked (GlcNAc...) asparagine glycan is linked to asparagine 33. Residues histidine 145, 190-191, and tyrosine 316 each bind a beta-D-glucoside; that span reads NQ. N-linked (GlcNAc...) asparagine glycosylation occurs at asparagine 336. Positions 386 and 404 each coordinate a beta-D-glucoside. Glutamate 386 serves as the catalytic Nucleophile.

Belongs to the glycosyl hydrolase 1 family. As to expression, expressed specifically in stamens and petals.

The enzyme catalyses a thioglucoside + H2O = a sugar + a thiol.. This chain is Putative myrosinase 3, found in Arabidopsis thaliana (Mouse-ear cress).